Reading from the N-terminus, the 332-residue chain is F-box/SPRY domain-containing protein 1 (332 aa).

Positions 1-82 (MAENDGETIV…RSPRRPEVSA (82 aa)) are disordered. 2 stretches are compositionally biased toward polar residues: residues 15–28 (CNLT…SSGL) and 49–64 (NPSS…QLTP). Residues 79–127 (EVSASRLPLKVLNQIFQYLPLKDLRSAMLTCHSWNNALSMEDSDIWQYL) enclose the F-box domain. Residues 138–330 (SDPFLLAELG…VTMVYVGSPQ (193 aa)) enclose the B30.2/SPRY domain.

The protein belongs to the FBXO45/Fsn family. As to quaternary structure, component of an SCF (SKP1-CUL1-F-box protein) E3 ubiquitin ligase complex composed of cul-1, fsn-1, rpm-1 and skr-1. Interacts (via SPRY domain) with scd-2 (via cytoplasmic domain). Interacts (via SPRY domain) with convertase egl-3 (via C-terminus). As to expression, expressed in GABAergic neuromuscular junctions (NMJs).

The protein resides in the synapse. The protein operates within protein modification; protein ubiquitination. Functionally, component of a SCF (SKP1-CUL1-F-box protein) E3 ubiquitin ligase complex which is required for the restriction and/or maturation of synapses in GABAergic neuromuscular junction (NMJ) presynaptic neurons. Promotes NRJ synapse development and synaptic transmission by negatively regulating the daf-2/InsR pathway in muscles. By targeting convertase egl-3 for degradation, negatively modulates insulin-like protein ins-4 and ins-6 processing. May stabilize synapse formation by promoting the down-regulation of scd-2. Regulates axon termination in PLM and ALM neurons. The protein is F-box/SPRY domain-containing protein 1 (fsn-1) of Caenorhabditis elegans.